The sequence spans 100 residues: Large ribosomal subunit protein bL27 (100 aa).

Positions 1 to 9 are excised as a propeptide; sequence MLSINLSLC.

It belongs to the bacterial ribosomal protein bL27 family. Post-translationally, the N-terminus is cleaved by ribosomal processing cysteine protease Prp.

This chain is Large ribosomal subunit protein bL27, found in Clostridium acetobutylicum (strain ATCC 824 / DSM 792 / JCM 1419 / IAM 19013 / LMG 5710 / NBRC 13948 / NRRL B-527 / VKM B-1787 / 2291 / W).